We begin with the raw amino-acid sequence, 147 residues long: Large ribosomal subunit protein uL16 (147 aa).

This sequence belongs to the universal ribosomal protein uL16 family. In terms of assembly, part of the 50S ribosomal subunit.

In terms of biological role, binds 23S rRNA and is also seen to make contacts with the A and possibly P site tRNAs. In Finegoldia magna (strain ATCC 29328 / DSM 20472 / WAL 2508) (Peptostreptococcus magnus), this protein is Large ribosomal subunit protein uL16.